A 338-amino-acid polypeptide reads, in one-letter code: Anthranilate phosphoribosyltransferase (338 aa).

5-phospho-alpha-D-ribose 1-diphosphate is bound by residues G80, 83–84 (GD), T88, 90–93 (NIST), 108–116 (KHGNRSVSS), and S120. G80 serves as a coordination point for anthranilate. S92 serves as a coordination point for Mg(2+). N111 contributes to the anthranilate binding site. Anthranilate is bound at residue R166. Residues D225 and E226 each contribute to the Mg(2+) site.

It belongs to the anthranilate phosphoribosyltransferase family. Homodimer. Mg(2+) serves as cofactor.

It catalyses the reaction N-(5-phospho-beta-D-ribosyl)anthranilate + diphosphate = 5-phospho-alpha-D-ribose 1-diphosphate + anthranilate. Its pathway is amino-acid biosynthesis; L-tryptophan biosynthesis; L-tryptophan from chorismate: step 2/5. Catalyzes the transfer of the phosphoribosyl group of 5-phosphorylribose-1-pyrophosphate (PRPP) to anthranilate to yield N-(5'-phosphoribosyl)-anthranilate (PRA). The sequence is that of Anthranilate phosphoribosyltransferase from Desulfatibacillum aliphaticivorans.